We begin with the raw amino-acid sequence, 259 residues long: Apolipoprotein A-I (259 aa).

A signal peptide spans M1–A18. A run of 2 repeats spans residues L67–G88 and P89–N110. The interval L67–A259 is 10 X approximate tandem repeats. Methionine sulfoxide is present on M109. One copy of the 3; half-length repeat lies at K111–Q121. The stretch at P122 to E143 is repeat 4. Residues P144–K161 form a 5; truncated repeat. Repeat unit 6 spans residues V162–G183. A 7; truncated repeat occupies L184–H203. Methionine sulfoxide is present on M189. Copy 8 of the repeat occupies P204 to K225. The 9; half-length repeat unit spans residues P226 to M236. M236 carries the post-translational modification Methionine sulfoxide. Repeat 10 spans residues P237–A259.

This sequence belongs to the apolipoprotein A1/A4/E family. Homodimer. Interacts with APOA1BP and CLU. Component of a sperm activating protein complex (SPAP), consisting of APOA1, an immunoglobulin heavy chain, an immunoglobulin light chain and albumin. Interacts with NDRG1. Interacts with SCGB3A2. Interacts with NAXE and YJEFN3. In terms of processing, glycosylated. Post-translationally, palmitoylated. Phosphorylation sites are present in the extracellular medium. In terms of tissue distribution, major protein of plasma HDL, also found in chylomicrons.

It is found in the secreted. Functionally, participates in the reverse transport of cholesterol from tissues to the liver for excretion by promoting cholesterol efflux from tissues and by acting as a cofactor for the lecithin cholesterol acyltransferase (LCAT). As part of the SPAP complex, activates spermatozoa motility. The protein is Apolipoprotein A-I (Apoa1) of Rattus norvegicus (Rat).